Consider the following 198-residue polypeptide: Ribonuclease HII (198 aa).

The 189-residue stretch at 10-198 (QLVAGVDEVG…PVKRALGLAS (189 aa)) folds into the RNase H type-2 domain. Residues Asp16, Glu17, and Asp108 each coordinate a divalent metal cation.

The protein belongs to the RNase HII family. Mn(2+) is required as a cofactor. The cofactor is Mg(2+).

The protein resides in the cytoplasm. The enzyme catalyses Endonucleolytic cleavage to 5'-phosphomonoester.. In terms of biological role, endonuclease that specifically degrades the RNA of RNA-DNA hybrids. The protein is Ribonuclease HII of Escherichia coli O6:H1 (strain CFT073 / ATCC 700928 / UPEC).